Here is a 122-residue protein sequence, read N- to C-terminus: Large ribosomal subunit protein uL14 (122 aa).

The protein belongs to the universal ribosomal protein uL14 family. Part of the 50S ribosomal subunit. Forms a cluster with proteins L3 and L19. In the 70S ribosome, L14 and L19 interact and together make contacts with the 16S rRNA in bridges B5 and B8.

Binds to 23S rRNA. Forms part of two intersubunit bridges in the 70S ribosome. This chain is Large ribosomal subunit protein uL14, found in Mycoplasmopsis agalactiae (strain NCTC 10123 / CIP 59.7 / PG2) (Mycoplasma agalactiae).